The chain runs to 300 residues: RNA polymerase sigma factor RpoH (300 aa).

Residues Leu53–Ser122 are sigma-70 factor domain-2. The Interaction with polymerase core subunit RpoC motif lies at Glu77–Ser80. Positions Ala231–Glu282 are sigma-70 factor domain-4. The segment at residues Leu255 to Val274 is a DNA-binding region (H-T-H motif).

The protein belongs to the sigma-70 factor family. RpoH subfamily. In terms of assembly, interacts with the RNA polymerase core enzyme.

Its subcellular location is the cytoplasm. Functionally, sigma factors are initiation factors that promote the attachment of RNA polymerase to specific initiation sites and are then released. This sigma factor is involved in regulation of expression of heat shock genes. In Rhizobium radiobacter (Agrobacterium tumefaciens), this protein is RNA polymerase sigma factor RpoH.